A 433-amino-acid polypeptide reads, in one-letter code: MSWNHQSVEIAVRRTTVPSPNLPPGFDFTDPAIYAERLPVAEFAELRSAAPIWWNGQDPGKGGGFHDGGFWAITKLNDVKEISRHSDVFSSYENGVIPRFKNDIAREDIEVQRFVMLNMDAPHHTRLRKIISRGFTPRAVGRLHDELQERAQKIAAEAAAAGSGDFVEQVSCELPLQAIAGLLGVPQEDRGKLFHWSNEMTGNEDPEYAHIDPKASSAELIGYAMKMAEEKAKNPADDIVTQLIQADIDGEKLSDDEFGFFVVMLAVAGNETTRNSITQGMMAFAEHPDQWELYKKVRPETAADEIVRWATPVTAFQRTALRDYELSGVQIKKGQRVVMFYRSANFDEEVFQDPFTFNILRNPNPHVGFGGTGAHYCIGANLARMTINLIFNAVADHMPDLKPISAPERLRSGWLNGIKHWQVDYTGRCPVAH.

Glycine 202 is a binding site for substrate. Residue cysteine 377 coordinates heme.

This sequence belongs to the cytochrome P450 family. It depends on heme as a cofactor.

The catalysed reaction is cholest-4-en-3-one + 6 reduced [2Fe-2S]-[ferredoxin] + 3 O2 + 5 H(+) = (25S)-3-oxocholest-4-en-26-oate + 6 oxidized [2Fe-2S]-[ferredoxin] + 4 H2O. It functions in the pathway steroid metabolism; cholesterol degradation. Involved in the utilization of cholesterol as the sole carbon and energy source by degrading the side chain during infection. Primarily catalyzes the sequential oxidation of the terminal methyl of cholest-4-en-3-one into (25S)-26-hydroxycholest-4-en-3-one (alcohol), (25S)-26-oxocholest-4-en-3-one (aldehyde), to finally yield the carboxylic acid (25S)-3-oxocholest-4-en-26-oate. Also able to sequentially oxidize cholesterol itself, not only cholest-4-en-3-one. The protein is Steroid C26-monooxygenase (cyp125) of Mycobacterium bovis (strain ATCC BAA-935 / AF2122/97).